Consider the following 255-residue polypeptide: Thiazole synthase (255 aa).

The active-site Schiff-base intermediate with DXP is Lys-96. 1-deoxy-D-xylulose 5-phosphate-binding positions include Gly-157, 184–185 (AG), and 206–207 (NT).

This sequence belongs to the ThiG family. In terms of assembly, homotetramer. Forms heterodimers with either ThiH or ThiS.

It is found in the cytoplasm. The catalysed reaction is [ThiS sulfur-carrier protein]-C-terminal-Gly-aminoethanethioate + 2-iminoacetate + 1-deoxy-D-xylulose 5-phosphate = [ThiS sulfur-carrier protein]-C-terminal Gly-Gly + 2-[(2R,5Z)-2-carboxy-4-methylthiazol-5(2H)-ylidene]ethyl phosphate + 2 H2O + H(+). It functions in the pathway cofactor biosynthesis; thiamine diphosphate biosynthesis. In terms of biological role, catalyzes the rearrangement of 1-deoxy-D-xylulose 5-phosphate (DXP) to produce the thiazole phosphate moiety of thiamine. Sulfur is provided by the thiocarboxylate moiety of the carrier protein ThiS. In vitro, sulfur can be provided by H(2)S. In Clostridium acetobutylicum (strain ATCC 824 / DSM 792 / JCM 1419 / IAM 19013 / LMG 5710 / NBRC 13948 / NRRL B-527 / VKM B-1787 / 2291 / W), this protein is Thiazole synthase.